A 127-amino-acid polypeptide reads, in one-letter code: Gonadotropin subunit beta-1 (127 aa).

The first 22 residues, 1–22 (MHLAVTALCLTLAPVLARASTS), serve as a signal peptide directing secretion. Cystine bridges form between Cys23-Cys71, Cys37-Cys86, Cys40-Cys124, Cys48-Cys102, Cys52-Cys104, and Cys107-Cys114. 2 N-linked (GlcNAc...) asparagine glycosylation sites follow: Asn27 and Asn44.

Belongs to the glycoprotein hormones subunit beta family. As to quaternary structure, heterodimer of an alpha and a beta chain.

The protein localises to the secreted. Involved in gametogenesis and steroidogenesis. In Anguilla japonica (Japanese eel), this protein is Gonadotropin subunit beta-1 (cgba).